The primary structure comprises 263 residues: Acetylglutamate kinase (263 aa).

Substrate contacts are provided by residues 48–49 (GG), arginine 70, and asparagine 162.

Belongs to the acetylglutamate kinase family. ArgB subfamily.

It localises to the cytoplasm. It catalyses the reaction N-acetyl-L-glutamate + ATP = N-acetyl-L-glutamyl 5-phosphate + ADP. It participates in amino-acid biosynthesis; L-arginine biosynthesis; N(2)-acetyl-L-ornithine from L-glutamate: step 2/4. Functionally, catalyzes the ATP-dependent phosphorylation of N-acetyl-L-glutamate. This is Acetylglutamate kinase from Vibrio parahaemolyticus serotype O3:K6 (strain RIMD 2210633).